The chain runs to 202 residues: CASP-like protein 2B1 (202 aa).

Residues 1-29 (MSYLGVGVSPGNVPVYHGSNLKVIDKRVR) are Cytoplasmic-facing. The helical transmembrane segment at 30–50 (LAELVLRCLICGLGVLAAVLV) threads the bilayer. Topologically, residues 51 to 72 (GTDTQVKEIFSIQKKARFTDMK) are extracellular. The chain crosses the membrane as a helical span at residues 73-93 (ALVFLVIANGIAAAYSLLQGV). The Cytoplasmic segment spans residues 94–109 (RCVVGMVRGSALFSKP). A helical membrane pass occupies residues 110-130 (LAWAIFSGDQMMAYLTVAAVA). The Extracellular portion of the chain corresponds to 131 to 164 (AAAQSAVFAKLGQPELQWMKICNMYGKFCNQVGE). Residues 165 to 185 (GIASALLVSVSMVVLSCISAF) form a helical membrane-spanning segment. The Cytoplasmic segment spans residues 186–202 (SLFRLYGANKGKDCTRW).

This sequence belongs to the Casparian strip membrane proteins (CASP) family. As to quaternary structure, homodimer and heterodimers.

It localises to the cell membrane. The chain is CASP-like protein 2B1 from Ricinus communis (Castor bean).